Here is a 373-residue protein sequence, read N- to C-terminus: MGHFSSMFNGLARSFSIKKVKNNNGNCDAKEAADEMASEAKKKELILKSSGYVNVQGSNNLASLFSKRGEKGVNQDCALVWEGFGCQEDMIFCGIFDGHGPWGHYVAKQVRNSMPLSLLCNWQKILAQATLEPELDLEGSNKKISRFDIWKQSYLKTCATVDQELEHHRKIDSYYSGTTALTIVRQGEVIYVANVGDSRAVLAMESDEGSLVAVQLTLDFKPNLPQEKERIIGCKGRVFCLDDEPGVHRVWQPDAETPGLAMSRAFGDYCIKEYGLVSVPEVTQRHISTKDHFIILASDGIWDVISNQEAIEIVSSTAERPKAAKRLVEQAVRAWKKKRRGYSMDDMSVVCLFLHSSSSSSLSQHHHAMTILK.

Positions 61-354 constitute a PPM-type phosphatase domain; the sequence is LASLFSKRGE…DDMSVVCLFL (294 aa). Mn(2+)-binding residues include aspartate 97, glycine 98, aspartate 299, and aspartate 345.

This sequence belongs to the PP2C family. Requires Mg(2+) as cofactor. Mn(2+) is required as a cofactor.

The enzyme catalyses O-phospho-L-seryl-[protein] + H2O = L-seryl-[protein] + phosphate. It catalyses the reaction O-phospho-L-threonyl-[protein] + H2O = L-threonyl-[protein] + phosphate. The chain is Probable protein phosphatase 2C 73 (PPC6-7) from Arabidopsis thaliana (Mouse-ear cress).